We begin with the raw amino-acid sequence, 94 residues long: Large ribosomal subunit protein uL23 (94 aa).

This sequence belongs to the universal ribosomal protein uL23 family. Part of the 50S ribosomal subunit. Contacts protein L29, and trigger factor when it is bound to the ribosome.

One of the early assembly proteins it binds 23S rRNA. One of the proteins that surrounds the polypeptide exit tunnel on the outside of the ribosome. Forms the main docking site for trigger factor binding to the ribosome. In Latilactobacillus sakei subsp. sakei (strain 23K) (Lactobacillus sakei subsp. sakei), this protein is Large ribosomal subunit protein uL23.